Consider the following 477-residue polypeptide: Pentatricopeptide repeat-containing protein At5g47360 (477 aa).

PPR repeat units lie at residues 129–163, 164–198, 199–233, 234–264, 273–307, 308–343, 344–378, 379–413, and 416–450; these read NVKT…NVCA, DTVA…GLYP, DVIT…DCVL, NSVT…MEKE, NAVT…GCMP, NRVT…GGVS, LSEC…GVRP, DGLA…DVKS, and DSDI…KMRL.

It belongs to the PPR family. P subfamily.

The polypeptide is Pentatricopeptide repeat-containing protein At5g47360 (Arabidopsis thaliana (Mouse-ear cress)).